The primary structure comprises 280 residues: Hydrolase MT0498 (280 aa).

The CN hydrolase domain occupies 1-251 (MRIALAQIRS…PQLLVADIDV (251 aa)). Catalysis depends on Glu40, which acts as the Proton acceptor. Catalysis depends on Lys110, which acts as the Proton donor. Cys146 functions as the Nucleophile in the catalytic mechanism.

This sequence belongs to the carbon-nitrogen hydrolase superfamily. NIT1/NIT2 family.

This is Hydrolase MT0498 from Mycobacterium tuberculosis (strain CDC 1551 / Oshkosh).